A 231-amino-acid chain; its full sequence is GSK-3-binding protein FRAT2 (231 aa).

2 disordered regions span residues 1 to 24 (MPCR…DDSF) and 53 to 109 (DTAH…PGAV). Positions 7 to 23 (EEEEAGDEAEGEEDDDS) are enriched in acidic residues. Residues 172–194 (DPHRLLQQLVLSGNLIKEAVRRL) are involved in GSK-3 binding. Residues 203–231 (ATSPASAPGSGGGRSGPDSVTLQPSGAWL) form a disordered region.

The protein belongs to the GSK-3-binding protein family. In terms of assembly, binds GSK-3 and prevents GSK-3-dependent phosphorylation.

Its function is as follows. Positively regulates the Wnt signaling pathway by stabilizing beta-catenin through the association with GSK-3. This chain is GSK-3-binding protein FRAT2 (Frat2), found in Mus musculus (Mouse).